A 79-amino-acid polypeptide reads, in one-letter code: Potassium channel toxin Hge-beta-KTx (79 aa).

An N-terminal signal peptide occupies residues 1 to 21 (MAKSFFAAFLIIMLISSLVDG). Residues 48 to 79 (EYMCPVVSSFCKQHCARLGKSGQCDLLECICS) enclose the BetaSPN-type CS-alpha/beta domain. Cystine bridges form between Cys51-Cys71, Cys58-Cys76, and Cys62-Cys78.

As to expression, expressed by the venom gland.

It is found in the secreted. The full peptide presents antibacterial and cytotoxic activities. The synthetic C-terminus (AA 33-76) inhibits voltage-gated potassium channels Kv1.1/KCNA1, Kv1.2/KCNA2, and Kv1.3/KCNA3. The chain is Potassium channel toxin Hge-beta-KTx from Hoffmannihadrurus gertschi (Scorpion).